A 146-amino-acid chain; its full sequence is UPF0742 protein PB2B2.17c (146 aa).

The chain crosses the membrane as a helical span at residues 38 to 60 (LTVKYCLAVKLLIYLLYCWYIYS).

This sequence belongs to the UPF0742 family.

Its subcellular location is the cytoplasm. The protein localises to the nucleus membrane. In Schizosaccharomyces pombe (strain 972 / ATCC 24843) (Fission yeast), this protein is UPF0742 protein PB2B2.17c.